The primary structure comprises 301 residues: Cuticle collagen 1 (301 aa).

Residues 1-37 (METDGRLKAYKFVAYAAVGFSIAAVASVLLTLPMVYS) form the signal peptide. Residues 79–82 (RTTR) are furin-like endopeptidase recognition region. Triple-helical region stretches follow at residues 105 to 134 (GPPG…PGKP), 153 to 179 (GPPG…PGTD), 183 to 209 (GSPG…PGTP), and 218 to 283 (GAPG…KGIC). Residues 109–284 (PAGAPGKPGK…GTPGEKGICP (176 aa)) are disordered. 2 stretches are compositionally biased toward pro residues: residues 131–164 (PGKP…PGAP) and 184–193 (SPGPRGPPGP). The segment covering 194–210 (AGEAGAPGPAGEPGTPA) has biased composition (low complexity). The span at 226–258 (SGPPGPPGPPGAPGNDGPPGPPGPKGAPGPDGP) shows a compositional bias: pro residues.

Belongs to the cuticular collagen family. As to quaternary structure, collagen polypeptide chains are complexed within the cuticle by disulfide bonds and other types of covalent cross-links.

It localises to the secreted. The protein resides in the extracellular space. Its function is as follows. Secreted collagen that forms part of the nematode cuticle, which functions as an exoskeleton and a barrier to protect the worm from its environment. Secretion and subsequent incorporation into the cuticle is likely mediated by bli-4, which probably cleaves at the N-terminal consensus furin cleavage site. In Caenorhabditis elegans, this protein is Cuticle collagen 1 (sqt-3).